Consider the following 314-residue polypeptide: Triosephosphate isomerase, chloroplastic (314 aa).

Residues 1 to 22 (MAVASTSLASQLSGPKSLSQPY) are compositionally biased toward polar residues. The interval 1–25 (MAVASTSLASQLSGPKSLSQPYSGL) is disordered. The transit peptide at 1–59 (MAVASTSLASQLSGPKSLSQPYSGLRRSCPKLDQSHSSLFQHLSLSSSSRKASRAVVAM) directs the protein to the chloroplast. 2 residues coordinate substrate: Asn70 and Lys72. His154 serves as the catalytic Electrophile. Glu224 (proton acceptor) is an active-site residue.

The protein belongs to the triosephosphate isomerase family. Homodimer.

Its subcellular location is the plastid. The protein resides in the chloroplast. The catalysed reaction is D-glyceraldehyde 3-phosphate = dihydroxyacetone phosphate. The protein operates within carbohydrate biosynthesis; Calvin cycle. This chain is Triosephosphate isomerase, chloroplastic (TPI), found in Fragaria ananassa (Strawberry).